The following is a 328-amino-acid chain: MMWRWTLMLLLLLLRHWALGKPSPDAGPHGQDRVHHGTPLSEAPHDDAHGNFQYDHEAFLGRDVAKEFDQLTPEESQARLGRIVDRMDLAGDSDGWVSLAELRAWIAHTQQRHIRDSVSAAWHTYDTDRDGRVGWEELRNATYGHYEPGEEFHDVEDAETYKKMLARDERRFRVADQDGDSMATREELTAFLHPEEFPHMRDIVVAETLEDLDKNKDGYVQVEEYIADLYSAEPGEEEPAWVQTERQQFRDFRDLNKDGRLDGSEVGYWVLPPSQDQPLVEANHLLHESDTDKDGRLSKAEILSNWNMFVGSQATNYGEDLTRHHDEL.

The first 20 residues, 1 to 20, serve as a signal peptide directing secretion; it reads MMWRWTLMLLLLLLRHWALG. The tract at residues 24–48 is disordered; it reads PDAGPHGQDRVHHGTPLSEAPHDDA. 6 EF-hand domains span residues 75 to 112, 113 to 148, 163 to 198, 200 to 235, 241 to 276, and 277 to 312; these read ESQA…TQQR, HIRD…HYEP, KMLA…EEFP, MRDI…AEPG, WVQT…PSQD, and QPLV…FVGS. Residues Asp-92, Asp-94, Trp-96, Glu-101, Asp-126, Asp-128, Asp-130, Arg-132, and Glu-137 each coordinate Ca(2+). N-linked (GlcNAc...) asparagine glycosylation is present at Asn-140. 20 residues coordinate Ca(2+): Asp-176, Asp-178, Asp-180, Met-182, Glu-187, Asp-213, Asn-215, Asp-217, Tyr-219, Glu-224, Asp-254, Asn-256, Asp-258, Arg-260, Glu-265, Asp-290, Asp-292, Asp-294, Arg-296, and Glu-301. The Prevents secretion from ER motif lies at 325–328; the sequence is HDEL.

The protein belongs to the CREC family. As to quaternary structure, interacts with PCSK6 (immature form including the propeptide); probably involved in the maturation and the secretion of PCSK6. Post-translationally, N-glycosylated. In terms of processing, degraded by PCSK6 and other endoproteases including FURIN and PCSK5.

It is found in the endoplasmic reticulum lumen. Functionally, probable molecular chaperone assisting protein biosynthesis and transport in the endoplasmic reticulum. Required for the proper biosynthesis and transport of pulmonary surfactant-associated protein A/SP-A, pulmonary surfactant-associated protein D/SP-D and the lipid transporter ABCA3. By regulating both the proper expression and the degradation through the endoplasmic reticulum-associated protein degradation pathway of these proteins plays a crucial role in pulmonary surfactant homeostasis. Has an anti-fibrotic activity by negatively regulating the secretion of type I and type III collagens. This calcium-binding protein also transiently associates with immature PCSK6 and regulates its secretion. The polypeptide is Reticulocalbin-3 (Rattus norvegicus (Rat)).